The primary structure comprises 187 residues: HTH-type transcriptional repressor Rv1474c (187 aa).

Residues 10 to 70 enclose the HTH tetR-type domain; the sequence is AARRRQILDG…ALAREDTERM (61 aa). Positions 33–52 form a DNA-binding region, H-T-H motif; the sequence is TVRRLEQAIGMSRGAIFHHF.

As to quaternary structure, homodimer.

Its activity is regulated as follows. Binding to DNA is abolished in the presence of high concentration of iron. Specifically binds to tetracycline, which leads to a conformational change in the structure of the protein and inhibits the DNA binding activity. In terms of biological role, represses the expression of the aconitase gene acn and its own expression, in an iron-responsive manner. Binds to the inverted repeat element present in the upstream region of acn (Rv1475c)-Rv1474c operon. Preferentially binds to major groove of the DNA. This is HTH-type transcriptional repressor Rv1474c from Mycobacterium tuberculosis (strain ATCC 25618 / H37Rv).